The following is a 219-amino-acid chain: Uracil-DNA glycosylase (219 aa).

The active-site Proton acceptor is the Asp-61.

This sequence belongs to the uracil-DNA glycosylase (UDG) superfamily. UNG family.

It is found in the cytoplasm. It catalyses the reaction Hydrolyzes single-stranded DNA or mismatched double-stranded DNA and polynucleotides, releasing free uracil.. In terms of biological role, excises uracil residues from the DNA which can arise as a result of misincorporation of dUMP residues by DNA polymerase or due to deamination of cytosine. This is Uracil-DNA glycosylase from Neisseria meningitidis serogroup C (strain 053442).